We begin with the raw amino-acid sequence, 127 residues long: Small ribosomal subunit protein uS12 (127 aa).

Aspartate 89 bears the 3-methylthioaspartic acid mark.

Belongs to the universal ribosomal protein uS12 family. In terms of assembly, part of the 30S ribosomal subunit. Contacts proteins S8 and S17. May interact with IF1 in the 30S initiation complex.

With S4 and S5 plays an important role in translational accuracy. Functionally, interacts with and stabilizes bases of the 16S rRNA that are involved in tRNA selection in the A site and with the mRNA backbone. Located at the interface of the 30S and 50S subunits, it traverses the body of the 30S subunit contacting proteins on the other side and probably holding the rRNA structure together. The combined cluster of proteins S8, S12 and S17 appears to hold together the shoulder and platform of the 30S subunit. The sequence is that of Small ribosomal subunit protein uS12 from Campylobacter lari (strain RM2100 / D67 / ATCC BAA-1060).